The primary structure comprises 856 residues: Cyclic di-GMP phosphodiesterase PdeB (856 aa).

2 helical membrane-spanning segments follow: residues 7 to 27 and 230 to 250; these read ILVFIVGFCLPAVVLVSYCLG and WVSLAVILLGILIVALGYVWL. One can recognise a PAS domain in the interval 303–350; that stretch reads QKERGKITLESIAEAVILTDIEAKVIYMNPKAETLLEVASSNAVGESL. The region spanning 454 to 587 is the GGDEF domain; the sequence is RSLAVCYLDL…GTNQIHIYDD (134 aa). Positions 598 to 852 constitute an EAL domain; sequence APKWAVRIAQ…SYCEQFETRL (255 aa).

It localises to the cell membrane. It catalyses the reaction 3',3'-c-di-GMP + H2O = 5'-phosphoguanylyl(3'-&gt;5')guanosine + H(+). In terms of biological role, affects motility and biofilm formation, and is linked to the regulation of sulfate uptake and assimilation. The protein is Cyclic di-GMP phosphodiesterase PdeB (pdeB) of Shewanella oneidensis (strain ATCC 700550 / JCM 31522 / CIP 106686 / LMG 19005 / NCIMB 14063 / MR-1).